The primary structure comprises 365 residues: MNLAAMDPQTYDTQLEHKRIKLEQAFAQFETPSVEVFASEPANYRMRAEFRMWHDGDDLYYYMFDKVLNEKVRCDQYLPASVLINQMMSALIAELKPNPSLRHKLFQVDFLSTLSGEILVSLLYHRQLDDQWRADAAALKTKLSSQFNVNIIGRARKQKIDLDKDFVVESLQVNDKTFLYKQIENSFTQPNAKVSVKMLEWAIDATQDSEGDLLELYCGNGNFSIALAQNFNRVLATELAKPSVDAAQYNIEVNGIENLQIIRMSAEDFSDAMAKKRSFRRLEGIDLDSYVCNTIFVDPPRAGIDPDTLALVQGYERILYISCNPETLKDNLQLLNETHKVTRFALFDQFPYTEHMETGVLLERR.

Positions 189, 217, 222, 238, and 298 each coordinate S-adenosyl-L-methionine. Cysteine 323 functions as the Nucleophile in the catalytic mechanism. The Proton acceptor role is filled by glutamate 357.

Belongs to the class I-like SAM-binding methyltransferase superfamily. RNA M5U methyltransferase family. TrmA subfamily.

It catalyses the reaction uridine(54) in tRNA + S-adenosyl-L-methionine = 5-methyluridine(54) in tRNA + S-adenosyl-L-homocysteine + H(+). The enzyme catalyses uridine(341) in tmRNA + S-adenosyl-L-methionine = 5-methyluridine(341) in tmRNA + S-adenosyl-L-homocysteine + H(+). Its function is as follows. Dual-specificity methyltransferase that catalyzes the formation of 5-methyluridine at position 54 (m5U54) in all tRNAs, and that of position 341 (m5U341) in tmRNA (transfer-mRNA). The protein is tRNA/tmRNA (uracil-C(5))-methyltransferase of Shewanella baltica (strain OS185).